The following is a 214-amino-acid chain: Cytochrome b (214 aa).

Helical transmembrane passes span phenylalanine 31–isoleucine 51, tryptophan 75–isoleucine 96, tryptophan 111–leucine 131, and phenylalanine 176–leucine 196. Residues histidine 81 and histidine 95 each contribute to the heme b site. Heme b is bound by residues histidine 180 and histidine 194. Histidine 199 contacts a ubiquinone.

Belongs to the cytochrome b family. The cytochrome bc1 complex contains 3 respiratory subunits (MT-CYB, CYC1 and UQCRFS1), 2 core proteins (UQCRC1 and UQCRC2) and probably 6 low-molecular weight proteins. The cofactor is heme b.

The protein localises to the mitochondrion inner membrane. Its function is as follows. Component of the ubiquinol-cytochrome c reductase complex (complex III or cytochrome b-c1 complex) that is part of the mitochondrial respiratory chain. The b-c1 complex mediates electron transfer from ubiquinol to cytochrome c. Contributes to the generation of a proton gradient across the mitochondrial membrane that is then used for ATP synthesis. This is Cytochrome b (MT-CYB) from Trimeresurus stejnegeri (Chinese green tree viper).